A 223-amino-acid chain; its full sequence is Protein-lysine N-methyltransferase CG9154 (223 aa).

Belongs to the class I-like SAM-binding methyltransferase superfamily. EFM5 family.

It is found in the cytoplasm. In terms of biological role, S-adenosyl-L-methionine-dependent protein-lysine N-methyltransferase that methylates elongation factor 1-alpha. The sequence is that of Protein-lysine N-methyltransferase CG9154 from Drosophila melanogaster (Fruit fly).